We begin with the raw amino-acid sequence, 790 residues long: Phenylalanine--tRNA ligase beta subunit (790 aa).

Residues 39 to 154 (PDSLNTVVTG…ADTPLGESAC (116 aa)) form the tRNA-binding domain. A B5 domain is found at 404–483 (FSPLSLSVRP…FVQKTQKILP (80 aa)). 4 residues coordinate Mg(2+): D457, D463, E466, and E467. In terms of domain architecture, FDX-ACB spans 694–790 (PIYPASSRDI…KLANIGQGNS (97 aa)).

Belongs to the phenylalanyl-tRNA synthetase beta subunit family. Type 1 subfamily. In terms of assembly, tetramer of two alpha and two beta subunits. Requires Mg(2+) as cofactor.

The protein localises to the cytoplasm. The catalysed reaction is tRNA(Phe) + L-phenylalanine + ATP = L-phenylalanyl-tRNA(Phe) + AMP + diphosphate + H(+). This is Phenylalanine--tRNA ligase beta subunit (pheT) from Chlamydia trachomatis serovar D (strain ATCC VR-885 / DSM 19411 / UW-3/Cx).